The sequence spans 372 residues: tRNA-specific 2-thiouridylase MnmA (372 aa).

ATP contacts are provided by residues 16-23 (GMSGGVDS) and Met-42. Positions 102-104 (NPD) are interaction with target base in tRNA. Residue Cys-107 is the Nucleophile of the active site. Cys-107 and Cys-205 are joined by a disulfide. ATP is bound at residue Gly-132. The tract at residues 155–157 (KDQ) is interaction with tRNA. Cys-205 serves as the catalytic Cysteine persulfide intermediate. Positions 317 to 318 (RY) are interaction with tRNA.

It belongs to the MnmA/TRMU family.

It is found in the cytoplasm. It catalyses the reaction S-sulfanyl-L-cysteinyl-[protein] + uridine(34) in tRNA + AH2 + ATP = 2-thiouridine(34) in tRNA + L-cysteinyl-[protein] + A + AMP + diphosphate + H(+). Catalyzes the 2-thiolation of uridine at the wobble position (U34) of tRNA, leading to the formation of s(2)U34. This Shewanella baltica (strain OS223) protein is tRNA-specific 2-thiouridylase MnmA.